A 379-amino-acid chain; its full sequence is MSATLALTEQLIARASVTPDDQHCQQLMTERLAALGFECETIASHGVTNLWAVKRGADGRDGKLLAFAGHTDVVPTGPLEQWTSPPFVPTHRDGKLYGRGAADMKTSLAAFVVASEEFVAAHPGHRGAIAFLITSDEEGPATDGTVKVVELLETRGERVDYCIVGEPTSSAELGDVVKNGRRGSMSGELVVKGVQGHIAYPHLAKNPIHLLAPALAELAAEQWDAGNEYFPPTTWQVSNLHAGTGATNVIPGHADLMFNFRFSTASTVEGLQARVHAILGKHGLEYTLKWSVSGLPFLTPRGDLSNALENAIRAETGLTTELSTTGGTSDGRFIARICPQVIEFGPPNGSIHKIDEHIDVRFVDPLKNVYRRVLEQLIA.

His70 is a binding site for Zn(2+). Asp72 is a catalytic residue. Residue Asp103 participates in Zn(2+) binding. Glu137 (proton acceptor) is an active-site residue. Zn(2+) is bound by residues Glu138, Glu166, and His352.

The protein belongs to the peptidase M20A family. DapE subfamily. In terms of assembly, homodimer. The cofactor is Zn(2+). Co(2+) is required as a cofactor.

It catalyses the reaction N-succinyl-(2S,6S)-2,6-diaminopimelate + H2O = (2S,6S)-2,6-diaminopimelate + succinate. Its pathway is amino-acid biosynthesis; L-lysine biosynthesis via DAP pathway; LL-2,6-diaminopimelate from (S)-tetrahydrodipicolinate (succinylase route): step 3/3. Its function is as follows. Catalyzes the hydrolysis of N-succinyl-L,L-diaminopimelic acid (SDAP), forming succinate and LL-2,6-diaminopimelate (DAP), an intermediate involved in the bacterial biosynthesis of lysine and meso-diaminopimelic acid, an essential component of bacterial cell walls. This is Succinyl-diaminopimelate desuccinylase from Burkholderia ambifaria (strain ATCC BAA-244 / DSM 16087 / CCUG 44356 / LMG 19182 / AMMD) (Burkholderia cepacia (strain AMMD)).